We begin with the raw amino-acid sequence, 292 residues long: Rab effector Noc2 (292 aa).

A RabBD domain is found at 41-158; the sequence is QRKSQSLSPA…KRSGAWFYKG (118 aa). An FYVE-type zinc finger spans residues 89–146; it reads GNGLSQCLLCGEVLGFLGSSSVFCKDCRKKVCTKCGIEASPSQKRPLWLCKICSEQRE. Zn(2+)-binding residues include Cys-95, Cys-98, Cys-112, Cys-115, Cys-120, Cys-123, Cys-138, and Cys-141. The disordered stretch occupies residues 175–292; sequence PSFRPLPVEP…RTLAGPRGPR (118 aa). Residues 221-235 show a composition bias toward basic and acidic residues; the sequence is LDDRLRPAGVRDPKG. A Phosphoserine modification is found at Ser-248. A compositionally biased stretch (low complexity) spans 257 to 269; that stretch reads ASCLSGSQSSLAS.

In terms of assembly, recruited to dense-core vesicles through specific interaction with RAB27A in endocrine cells. Interacts with RAB3A, RAB3B, RAB3C and RAB3D. Interacts with ZYX.

The protein localises to the cytoplasm. The protein resides in the cytoplasmic vesicle. Its subcellular location is the secretory vesicle membrane. Its function is as follows. Rab GTPase effector involved in the late steps of regulated exocytosis, both in endocrine and exocrine cells. In Bos taurus (Bovine), this protein is Rab effector Noc2 (RPH3AL).